A 49-amino-acid chain; its full sequence is Large ribosomal subunit protein bL33B (49 aa).

This sequence belongs to the bacterial ribosomal protein bL33 family.

The polypeptide is Large ribosomal subunit protein bL33B (Oceanobacillus iheyensis (strain DSM 14371 / CIP 107618 / JCM 11309 / KCTC 3954 / HTE831)).